A 556-amino-acid polypeptide reads, in one-letter code: Cytochrome P450 4g1 (556 aa).

Residues glutamate 356 and cysteine 497 each coordinate heme.

This sequence belongs to the cytochrome P450 family. Requires heme as cofactor.

It is found in the endoplasmic reticulum membrane. It localises to the microsome membrane. Functionally, may be involved in the metabolism of insect hormones and in the breakdown of synthetic insecticides. The polypeptide is Cytochrome P450 4g1 (Cyp4g1) (Drosophila melanogaster (Fruit fly)).